Consider the following 100-residue polypeptide: Large ribosomal subunit protein bL21 (100 aa).

Belongs to the bacterial ribosomal protein bL21 family. As to quaternary structure, part of the 50S ribosomal subunit. Contacts protein L20.

Its function is as follows. This protein binds to 23S rRNA in the presence of protein L20. This is Large ribosomal subunit protein bL21 from Mycoplasma pneumoniae (strain ATCC 29342 / M129 / Subtype 1) (Mycoplasmoides pneumoniae).